A 171-amino-acid polypeptide reads, in one-letter code: 2-C-methyl-D-erythritol 2,4-cyclodiphosphate synthase (171 aa).

A divalent metal cation-binding residues include D8 and H10. 4-CDP-2-C-methyl-D-erythritol 2-phosphate is bound by residues 8–10 (DVH) and 34–35 (HS). H42 serves as a coordination point for a divalent metal cation. Residues 56–58 (DIG), 61–65 (FPDTD), 132–135 (TTTE), F139, and R142 contribute to the 4-CDP-2-C-methyl-D-erythritol 2-phosphate site.

The protein belongs to the IspF family. As to quaternary structure, homotrimer. A divalent metal cation is required as a cofactor.

It carries out the reaction 4-CDP-2-C-methyl-D-erythritol 2-phosphate = 2-C-methyl-D-erythritol 2,4-cyclic diphosphate + CMP. Its pathway is isoprenoid biosynthesis; isopentenyl diphosphate biosynthesis via DXP pathway; isopentenyl diphosphate from 1-deoxy-D-xylulose 5-phosphate: step 4/6. Involved in the biosynthesis of isopentenyl diphosphate (IPP) and dimethylallyl diphosphate (DMAPP), two major building blocks of isoprenoid compounds. Catalyzes the conversion of 4-diphosphocytidyl-2-C-methyl-D-erythritol 2-phosphate (CDP-ME2P) to 2-C-methyl-D-erythritol 2,4-cyclodiphosphate (ME-CPP) with a corresponding release of cytidine 5-monophosphate (CMP). This chain is 2-C-methyl-D-erythritol 2,4-cyclodiphosphate synthase, found in Geotalea daltonii (strain DSM 22248 / JCM 15807 / FRC-32) (Geobacter daltonii).